A 262-amino-acid chain; its full sequence is Phosphoribosyl 1,2-cyclic phosphate 1,2-diphosphodiesterase (262 aa).

Residues His-6, His-8, Asp-13, His-38, Glu-63, His-76, His-193, Asp-245, and His-247 each contribute to the Mn(2+) site.

The protein belongs to the PHP family. It depends on Mn(2+) as a cofactor.

The enzyme catalyses alpha-D-ribose 1,2-cyclic phosphate 5-phosphate + H2O = D-ribose 2,5-bisphosphate + H(+). It carries out the reaction D-ribose 2,5-bisphosphate + H2O = D-ribose 5-phosphate + phosphate. Its function is as follows. Involved in degradation of methylphosphonate. Catalyzes the hydrolysis of the phosphate ester at carbon-1 of 5-phospho-D-ribose 1,2-cyclic phosphate to form ribose 2,5-bisphosphate. This intermediate is then hydrolyzed to ribose-5-phosphate and inorganic phosphate. This Eggerthella lenta (strain ATCC 25559 / DSM 2243 / CCUG 17323 / JCM 9979 / KCTC 3265 / NCTC 11813 / VPI 0255 / 1899 B) (Eubacterium lentum) protein is Phosphoribosyl 1,2-cyclic phosphate 1,2-diphosphodiesterase.